The primary structure comprises 134 residues: Thioredoxin-like protein Clot (134 aa).

The 134-residue stretch at Met-1–Thr-134 folds into the Thioredoxin domain. Active-site nucleophile residues include Cys-48 and Cys-51. Cys-48 and Cys-51 are disulfide-bonded.

The protein belongs to the thioredoxin family.

In terms of biological role, probable thiol-disulfide oxidoreductase that may participate in various redox reactions. The polypeptide is Thioredoxin-like protein Clot (Arabidopsis thaliana (Mouse-ear cress)).